We begin with the raw amino-acid sequence, 148 residues long: Glutamate mutase sigma subunit 2 (148 aa).

One can recognise a B12-binding domain in the interval 1–134 (MRTVILGVIG…EALKADLGHR (134 aa)). Residues 11–15 (SDAHV), histidine 14, 59–61 (SSL), and 90–94 (NLAVG) each bind adenosylcob(III)alamin. Over residues 129–141 (ADLGHRSREEASS) the composition is skewed to basic and acidic residues. The segment at 129–148 (ADLGHRSREEASSEKVQLGS) is disordered.

It belongs to the methylaspartate mutase GlmS subunit family. As to quaternary structure, heterotetramer composed of 2 epsilon subunits (GlmE) and 2 sigma subunits (GlmS). GlmE exists as a homodimer and GlmS as a monomer. It depends on adenosylcob(III)alamin as a cofactor.

The catalysed reaction is (2S,3S)-3-methyl-L-aspartate = L-glutamate. The protein operates within amino-acid degradation; L-glutamate degradation via mesaconate pathway; acetate and pyruvate from L-glutamate: step 1/4. Functionally, catalyzes the carbon skeleton rearrangement of L-glutamate to L-threo-3-methylaspartate ((2S,3S)-3-methylaspartate). This is Glutamate mutase sigma subunit 2 from Haloarcula marismortui (strain ATCC 43049 / DSM 3752 / JCM 8966 / VKM B-1809) (Halobacterium marismortui).